A 401-amino-acid polypeptide reads, in one-letter code: Renin-2 (401 aa).

Positions 1–25 (MDRRRMPLWALLLLWSPCTFSLPTG) are cleaved as a signal peptide. The propeptide at 26 to 63 (TTFERIPLKKMPSVREILEERGVDMTRLSAEWDVFTKR) is activation peptide. The 316-residue stretch at 83 to 398 (YYGEIGIGTP…DRHNNRIGFA (316 aa)) folds into the Peptidase A1 domain. Asp-101 is a catalytic residue. 2 disulfides stabilise this stretch: Cys-114-Cys-121 and Cys-277-Cys-281. Asp-286 is an active-site residue. Cys-320 and Cys-357 are joined by a disulfide.

It belongs to the peptidase A1 family. In terms of assembly, dimer of a heavy chain and a light chain joined by a disulfide bond. Submandibular gland.

It is found in the secreted. It carries out the reaction Cleavage of Leu-|-Xaa bond in angiotensinogen to generate angiotensin I.. Functionally, renin is a highly specific endopeptidase, related to pepsin, whose only known function is to generate angiotensin I from angiotensinogen in the plasma, initiating a cascade of reactions that produce an elevation of blood pressure and increased sodium retention by the kidney. The protein is Renin-2 of Mus musculus (Mouse).